We begin with the raw amino-acid sequence, 221 residues long: Transcription repressor OFP8 (221 aa).

Acidic residues predominate over residues 124–138 (EDEGDKEESEDDDSD). Residues 124-147 (EDEGDKEESEDDDSDTLFSSRSFS) form a disordered region. In terms of domain architecture, OVATE spans 158 to 217 (VVKKSKDPYEDFRTSMVEMIVERQIFAPAELQQLLQCFLSLNSRQHHKVIVQVFLEIYAT).

In terms of tissue distribution, expressed in roots, rosette and cauline leaves, shoots, stems, flower buds and siliques.

The protein resides in the nucleus. Functionally, transcriptional repressor that regulates multiple aspects of plant growth and development through the regulation of BEL1-LIKE (BLH) and KNOX TALE (KNAT) homeodomain transcription factors. This is Transcription repressor OFP8 (OFP8) from Arabidopsis thaliana (Mouse-ear cress).